Consider the following 126-residue polypeptide: Holo-[acyl-carrier-protein] synthase (126 aa).

D9 and E58 together coordinate Mg(2+).

The protein belongs to the P-Pant transferase superfamily. AcpS family. Mg(2+) is required as a cofactor.

The protein resides in the cytoplasm. The catalysed reaction is apo-[ACP] + CoA = holo-[ACP] + adenosine 3',5'-bisphosphate + H(+). Transfers the 4'-phosphopantetheine moiety from coenzyme A to a Ser of acyl-carrier-protein. This chain is Holo-[acyl-carrier-protein] synthase, found in Salmonella paratyphi B (strain ATCC BAA-1250 / SPB7).